Reading from the N-terminus, the 61-residue chain is MNAKFILLLLVVTTTTLLPDAKGAEIIRCSGTRECYAPCQKLTGCLNAKCMNKACKCYGCV.

An N-terminal signal peptide occupies residues 1-23; that stretch reads MNAKFILLLLVVTTTTLLPDAKG. 4 disulfides stabilise this stretch: C29-C50, C35-C55, C39-C57, and C45-C60.

Belongs to the short scorpion toxin superfamily. Potassium channel inhibitor family. Alpha-KTx 06 subfamily. Expressed by the venom gland.

The protein localises to the secreted. Its function is as follows. Inhibits Kv1.2/KCNA2 and Kv1.3/KCNA3 voltage-gated potassium channels. The chain is Potassium channel toxin alpha-KTx 6.9 from Opistophthalmus carinatus (African yellow leg scorpion).